Reading from the N-terminus, the 813-residue chain is Ubiquitin carboxyl-terminal hydrolase 45 (813 aa).

Over residues 1 to 14 (MRVKDPSKDLPEKG) the composition is skewed to basic and acidic residues. The interval 1-27 (MRVKDPSKDLPEKGKRNKRPLLPHDED) is disordered. Positions 1–62 (MRVKDPSKDL…AVAESLWSVC (62 aa)) are interaction with ERCC1. Residues Ser-28 and Ser-29 each carry the phosphoserine modification. The UBP-type zinc-finger motif lies at 36–153 (LTCQHVSYAV…AQIVDFLQKH (118 aa)). Residues Cys-38, His-40, Cys-62, Cys-65, Cys-85, Cys-88, Cys-93, His-101, His-105, His-114, Cys-127, and Cys-130 each contribute to the Zn(2+) site. Residues 191–812 (KGITNLGNTC…QAYLLFYERI (622 aa)) form the USP domain. Catalysis depends on Cys-200, which acts as the Nucleophile. Composition is skewed to basic and acidic residues over residues 405 to 414 (LQETDQDHNK) and 450 to 466 (WPSE…KNDN). A disordered region spans residues 405–552 (LQETDQDHNK…QAKETHGGEE (148 aa)). A compositionally biased stretch (polar residues) spans 472-488 (PASTLSTEASLNESLTD). Phosphoserine occurs at positions 507 and 525. The span at 521–533 (SRGDSCGHAEQHP) shows a compositional bias: basic and acidic residues. His-745 functions as the Proton acceptor in the catalytic mechanism.

Belongs to the peptidase C19 family. Interacts with ERCC1. The catalytically active form interacts with SPDL1. As to expression, retina.

It is found in the photoreceptor inner segment. It localises to the cytoplasm. Its subcellular location is the nucleus. The enzyme catalyses Thiol-dependent hydrolysis of ester, thioester, amide, peptide and isopeptide bonds formed by the C-terminal Gly of ubiquitin (a 76-residue protein attached to proteins as an intracellular targeting signal).. Functionally, catalyzes the deubiquitination of SPDL1. Plays a role in the repair of UV-induced DNA damage via deubiquitination of ERCC1, promoting its recruitment to DNA damage sites. May be involved in the maintenance of photoreceptor function. May play a role in normal retinal development. Plays a role in cell migration. The chain is Ubiquitin carboxyl-terminal hydrolase 45 (Usp45) from Mus musculus (Mouse).